Consider the following 859-residue polypeptide: Alanine--tRNA ligase (859 aa).

Residues His-562, His-566, Cys-664, and His-668 each contribute to the Zn(2+) site.

The protein belongs to the class-II aminoacyl-tRNA synthetase family. It depends on Zn(2+) as a cofactor.

The protein localises to the cytoplasm. The enzyme catalyses tRNA(Ala) + L-alanine + ATP = L-alanyl-tRNA(Ala) + AMP + diphosphate. Catalyzes the attachment of alanine to tRNA(Ala) in a two-step reaction: alanine is first activated by ATP to form Ala-AMP and then transferred to the acceptor end of tRNA(Ala). Also edits incorrectly charged Ser-tRNA(Ala) and Gly-tRNA(Ala) via its editing domain. The polypeptide is Alanine--tRNA ligase (Aliivibrio fischeri (strain ATCC 700601 / ES114) (Vibrio fischeri)).